The primary structure comprises 1609 residues: Transmembrane protein 131-like (1609 aa).

An N-terminal signal peptide occupies residues 1-40 (MAGLRRPQPGCYCRTAAAVNLLLGVFQVLLPCCRPGGAQG). Over 41 to 869 (QAIEPLPNVV…VVPGPSWEES (829 aa)) the chain is Extracellular. N-linked (GlcNAc...) asparagine glycans are attached at residues Asn343, Asn439, Asn522, Asn593, Asn709, and Asn846. Residues 696 to 916 (DYGKVTSLIL…QNASSSSQQN (221 aa)) are required for Wnt-signaling inhibition and LRP6 degradation. The helical transmembrane segment at 870-890 (FWRLTVFFVSLSLLGVILIAF) threads the bilayer. Over 891–1609 (QQAQYILMEF…SRDSSYCGNV (719 aa)) the chain is Cytoplasmic. Disordered stretches follow at residues 946–974 (RGKN…YGHS), 991–1014 (TAAA…SSLP), 1108–1144 (KTSK…NQQV), 1159–1178 (VDTK…EDMF), and 1304–1340 (SSSD…PMVD). Polar residues predominate over residues 952–961 (PVNTPQSRIQ). The segment covering 991 to 1000 (TAAASSTSTT) has biased composition (low complexity). Ser1122 carries the post-translational modification Phosphoserine. A compositionally biased stretch (low complexity) spans 1304-1331 (SSSDCGSSSGSVRASRGSWGSWSSTSSS).

Belongs to the TMEM131 family. In terms of tissue distribution, expressed in thymocytes.

Its subcellular location is the cell membrane. It is found in the cytoplasm. The protein localises to the endoplasmic reticulum. In terms of biological role, membrane-associated form that antagonizes canonical Wnt signaling by triggering lysosome-dependent degradation of Wnt-activated LRP6. Regulates thymocyte proliferation. The sequence is that of Transmembrane protein 131-like from Homo sapiens (Human).